Here is a 133-residue protein sequence, read N- to C-terminus: ATP synthase epsilon chain (133 aa).

Belongs to the ATPase epsilon chain family. F-type ATPases have 2 components, CF(1) - the catalytic core - and CF(0) - the membrane proton channel. CF(1) has five subunits: alpha(3), beta(3), gamma(1), delta(1), epsilon(1). CF(0) has three main subunits: a, b and c.

The protein localises to the cell membrane. Its function is as follows. Produces ATP from ADP in the presence of a proton gradient across the membrane. The sequence is that of ATP synthase epsilon chain from Clostridium botulinum (strain ATCC 19397 / Type A).